The following is a 518-amino-acid chain: Calcium-dependent protein kinase 1 (518 aa).

Over residues 1 to 10 (MGNRTSRHHR) the composition is skewed to basic residues. A disordered region spans residues 1 to 49 (MGNRTSRHHRAAPEQPPPQPKPKPQPQQQQQQWPRPQQPTPPPAAAPDA). Gly2 is lipidated: N-myristoyl glycine. Pro residues predominate over residues 14 to 25 (EQPPPQPKPKPQ). A compositionally biased stretch (low complexity) spans 26–35 (PQQQQQQWPR). Residues 36-45 (PQQPTPPPAA) are compositionally biased toward pro residues. The Protein kinase domain occupies 66–324 (YTFGRELGRG…SAEILNHPWI (259 aa)). Residues 72-80 (LGRGQFGVT) and Lys95 contribute to the ATP site. The active-site Proton acceptor is the Asp190. The tract at residues 330-360 (APDKPLDITVISRMKQFRAMNKLKKVALKVV) is autoinhibitory domain. 4 consecutive EF-hand domains span residues 367 to 402 (EEIT…LGTK), 403 to 438 (ISES…MNRL), 439 to 474 (EKED…YDMG), and 475 to 509 (DDKT…NNPE). 20 residues coordinate Ca(2+): Asp380, Asp382, Ser384, Thr386, Glu391, Asp416, Asp418, Asn420, Thr422, Glu427, Asp452, Asp454, Ser456, Tyr458, Glu463, Asp487, Asp489, Asp491, Arg493, and Glu498.

Belongs to the protein kinase superfamily. Ser/Thr protein kinase family. CDPK subfamily. Expressed in roots and leaf blades.

It localises to the membrane. It catalyses the reaction L-seryl-[protein] + ATP = O-phospho-L-seryl-[protein] + ADP + H(+). It carries out the reaction L-threonyl-[protein] + ATP = O-phospho-L-threonyl-[protein] + ADP + H(+). Its activity is regulated as follows. Activated by calcium. Autophosphorylation may play an important role in the regulation of the kinase activity. Its function is as follows. May play a role in signal transduction pathways that involve calcium as a second messenger. In Oryza sativa subsp. japonica (Rice), this protein is Calcium-dependent protein kinase 1.